A 325-amino-acid chain; its full sequence is Heat-inducible transcription repressor HrcA (325 aa).

It belongs to the HrcA family.

Negative regulator of class I heat shock genes (grpE-dnaK-dnaJ and groELS operons). Prevents heat-shock induction of these operons. The sequence is that of Heat-inducible transcription repressor HrcA from Staphylococcus epidermidis (strain ATCC 35984 / DSM 28319 / BCRC 17069 / CCUG 31568 / BM 3577 / RP62A).